A 284-amino-acid chain; its full sequence is Bifunctional protein FolD (284 aa).

NADP(+)-binding positions include 165–167 (GRS), S190, and I231.

This sequence belongs to the tetrahydrofolate dehydrogenase/cyclohydrolase family. As to quaternary structure, homodimer.

It carries out the reaction (6R)-5,10-methylene-5,6,7,8-tetrahydrofolate + NADP(+) = (6R)-5,10-methenyltetrahydrofolate + NADPH. It catalyses the reaction (6R)-5,10-methenyltetrahydrofolate + H2O = (6R)-10-formyltetrahydrofolate + H(+). It functions in the pathway one-carbon metabolism; tetrahydrofolate interconversion. Functionally, catalyzes the oxidation of 5,10-methylenetetrahydrofolate to 5,10-methenyltetrahydrofolate and then the hydrolysis of 5,10-methenyltetrahydrofolate to 10-formyltetrahydrofolate. The chain is Bifunctional protein FolD from Streptococcus thermophilus (strain ATCC BAA-250 / LMG 18311).